The sequence spans 212 residues: Pyridoxine/pyridoxamine 5'-phosphate oxidase (212 aa).

Residues 1-20 (MSDSAMEPQNPLTSGDFTAA) form a disordered region. Residues 59-64 (RMVLLK), 74-75 (YT), Lys81, and Gln103 each bind FMN. Lys64 contributes to the substrate binding site. Substrate-binding residues include Tyr121, Arg125, and Ser129. FMN-binding positions include 138-139 (QS) and Trp183. A substrate-binding site is contributed by 189-191 (RLH). FMN is bound at residue Arg193.

Belongs to the pyridoxamine 5'-phosphate oxidase family. Homodimer. The cofactor is FMN.

The enzyme catalyses pyridoxamine 5'-phosphate + O2 + H2O = pyridoxal 5'-phosphate + H2O2 + NH4(+). The catalysed reaction is pyridoxine 5'-phosphate + O2 = pyridoxal 5'-phosphate + H2O2. Its pathway is cofactor metabolism; pyridoxal 5'-phosphate salvage; pyridoxal 5'-phosphate from pyridoxamine 5'-phosphate: step 1/1. The protein operates within cofactor metabolism; pyridoxal 5'-phosphate salvage; pyridoxal 5'-phosphate from pyridoxine 5'-phosphate: step 1/1. Functionally, catalyzes the oxidation of either pyridoxine 5'-phosphate (PNP) or pyridoxamine 5'-phosphate (PMP) into pyridoxal 5'-phosphate (PLP). This is Pyridoxine/pyridoxamine 5'-phosphate oxidase from Azorhizobium caulinodans (strain ATCC 43989 / DSM 5975 / JCM 20966 / LMG 6465 / NBRC 14845 / NCIMB 13405 / ORS 571).